A 275-amino-acid polypeptide reads, in one-letter code: NH(3)-dependent NAD(+) synthetase (275 aa).

46-53 (GISGGQDS) lines the ATP pocket. Aspartate 52 is a Mg(2+) binding site. Arginine 140 is a binding site for deamido-NAD(+). ATP is bound at residue threonine 160. Glutamate 165 contacts Mg(2+). Residues lysine 173 and aspartate 180 each contribute to the deamido-NAD(+) site. 2 residues coordinate ATP: lysine 189 and threonine 211. Deamido-NAD(+) is bound at residue 260 to 261 (HK).

This sequence belongs to the NAD synthetase family. In terms of assembly, homodimer.

The enzyme catalyses deamido-NAD(+) + NH4(+) + ATP = AMP + diphosphate + NAD(+) + H(+). The protein operates within cofactor biosynthesis; NAD(+) biosynthesis; NAD(+) from deamido-NAD(+) (ammonia route): step 1/1. Functionally, catalyzes the ATP-dependent amidation of deamido-NAD to form NAD. Uses ammonia as a nitrogen source. The protein is NH(3)-dependent NAD(+) synthetase of Escherichia coli O8 (strain IAI1).